The chain runs to 372 residues: Alanine racemase (372 aa).

K48 acts as the Proton acceptor; specific for D-alanine in catalysis. The residue at position 48 (K48) is an N6-(pyridoxal phosphate)lysine. R143 contacts substrate. Catalysis depends on Y268, which acts as the Proton acceptor; specific for L-alanine. Residue M316 participates in substrate binding.

The protein belongs to the alanine racemase family. Pyridoxal 5'-phosphate is required as a cofactor.

The catalysed reaction is L-alanine = D-alanine. It functions in the pathway amino-acid biosynthesis; D-alanine biosynthesis; D-alanine from L-alanine: step 1/1. Functionally, catalyzes the interconversion of L-alanine and D-alanine. May also act on other amino acids. The protein is Alanine racemase (alr) of Vibrio vulnificus (strain YJ016).